The chain runs to 691 residues: Menaquinone reductase, molybdopterin-binding-like subunit (691 aa).

A signal peptide (tat-type signal) is located at residues Met1–Lys27. A 4Fe-4S Mo/W bis-MGD-type domain is found at Asn50–Ala106.

This sequence belongs to the prokaryotic molybdopterin-containing oxidoreductase family. In terms of assembly, the Qrc complex is composed of four subunits: QrcA, QrcB, QrcC and QrcD. Can form a supercomplex with the [NiFe] hydrogenase HynA1 and the tetraheme Type I cytochrome c3 TpIc(3), its physiological electron donors. There is no molybdenum or tungsten pterin cofactor present in the Qrc complex, despite the similarity of QrcB to molybdopterin-containing oxidoreductases. serves as cofactor. Predicted to be exported by the Tat system. The position of the signal peptide cleavage has not been experimentally proven.

Its subcellular location is the periplasm. Functionally, component of the respiratory Qrc complex, that catalyzes the reduction of the menaquinone pool using electrons transferred from the reduced periplasmic cytochrome c3, and which is probably involved in sulfate respiration. Is likely essential for growth on H(2) or formate since the periplasmic hydrogenases and/or formate dehydrogenases act as primary electron donors for the Qrc complex. The function of the QrcB subunit is unknown; in the absence of a catalytic site, it may provide a structural scaffold for the other subunits. This Nitratidesulfovibrio vulgaris (strain ATCC 29579 / DSM 644 / CCUG 34227 / NCIMB 8303 / VKM B-1760 / Hildenborough) (Desulfovibrio vulgaris) protein is Menaquinone reductase, molybdopterin-binding-like subunit.